The following is a 345-amino-acid chain: Nicotinate-nucleotide--dimethylbenzimidazole phosphoribosyltransferase (345 aa).

Glu311 acts as the Proton acceptor in catalysis.

It belongs to the CobT family.

The catalysed reaction is 5,6-dimethylbenzimidazole + nicotinate beta-D-ribonucleotide = alpha-ribazole 5'-phosphate + nicotinate + H(+). It participates in nucleoside biosynthesis; alpha-ribazole biosynthesis; alpha-ribazole from 5,6-dimethylbenzimidazole: step 1/2. In terms of biological role, catalyzes the synthesis of alpha-ribazole-5'-phosphate from nicotinate mononucleotide (NAMN) and 5,6-dimethylbenzimidazole (DMB). In Janthinobacterium sp. (strain Marseille) (Minibacterium massiliensis), this protein is Nicotinate-nucleotide--dimethylbenzimidazole phosphoribosyltransferase.